The chain runs to 821 residues: DNA ligase (821 aa).

NAD(+)-binding positions include 50 to 54 (DAEYD), 99 to 100 (SL), and glutamate 140. The N6-AMP-lysine intermediate role is filled by lysine 142. NAD(+) contacts are provided by arginine 163, glutamate 200, lysine 319, and lysine 343. 4 residues coordinate Zn(2+): cysteine 452, cysteine 455, cysteine 470, and cysteine 476. The 80-residue stretch at 742-821 (AAALPLEGKT…AGLQALLAGN (80 aa)) folds into the BRCT domain.

The protein belongs to the NAD-dependent DNA ligase family. LigA subfamily. Mg(2+) serves as cofactor. The cofactor is Mn(2+).

It catalyses the reaction NAD(+) + (deoxyribonucleotide)n-3'-hydroxyl + 5'-phospho-(deoxyribonucleotide)m = (deoxyribonucleotide)n+m + AMP + beta-nicotinamide D-nucleotide.. Functionally, DNA ligase that catalyzes the formation of phosphodiester linkages between 5'-phosphoryl and 3'-hydroxyl groups in double-stranded DNA using NAD as a coenzyme and as the energy source for the reaction. It is essential for DNA replication and repair of damaged DNA. This chain is DNA ligase, found in Chromobacterium violaceum (strain ATCC 12472 / DSM 30191 / JCM 1249 / CCUG 213 / NBRC 12614 / NCIMB 9131 / NCTC 9757 / MK).